The primary structure comprises 57 residues: UPF0391 membrane protein RPE_2138 (57 aa).

2 helical membrane-spanning segments follow: residues 4-24 (WVVTFLVVALIAGILGFGGIA) and 30-50 (IAKIIFFIAVVLFLVSAVIGL).

It belongs to the UPF0391 family.

The protein resides in the cell membrane. In Rhodopseudomonas palustris (strain BisA53), this protein is UPF0391 membrane protein RPE_2138.